The primary structure comprises 107 residues: SH3 domain-binding glutamic acid-rich-like protein 2 (107 aa).

The SH3-binding motif lies at 61-67 (QGNPLPP).

It belongs to the SH3BGR family.

The protein localises to the nucleus. The polypeptide is SH3 domain-binding glutamic acid-rich-like protein 2 (Sh3bgrl2) (Mus musculus (Mouse)).